Here is a 21-residue protein sequence, read N- to C-terminus: DGPAQKQNTVNQLLVLIYLYK.

The protein belongs to the tyrosinase family. Hemocyanin subfamily. Hemolymph.

The protein localises to the secreted. It is found in the extracellular space. In terms of biological role, hemocyanins are copper-containing oxygen carriers occurring freely dissolved in the hemolymph of many mollusks and arthropods. This Maja squinado (Mediterranean spider crab) protein is Hemocyanin subunit 4.